We begin with the raw amino-acid sequence, 875 residues long: Alanine--tRNA ligase (875 aa).

Positions 564, 568, 666, and 670 each coordinate Zn(2+).

Belongs to the class-II aminoacyl-tRNA synthetase family. Homotetramer. It depends on Zn(2+) as a cofactor.

Its subcellular location is the cytoplasm. The catalysed reaction is tRNA(Ala) + L-alanine + ATP = L-alanyl-tRNA(Ala) + AMP + diphosphate. Catalyzes the attachment of alanine to tRNA(Ala) in a two-step reaction: alanine is first activated by ATP to form Ala-AMP and then transferred to the acceptor end of tRNA(Ala). Also edits incorrectly charged Ser-tRNA(Ala) and Gly-tRNA(Ala) via its editing domain. This is Alanine--tRNA ligase from Enterobacter sp. (strain 638).